Here is a 290-residue protein sequence, read N- to C-terminus: Glycine--tRNA ligase alpha subunit (290 aa).

Belongs to the class-II aminoacyl-tRNA synthetase family. In terms of assembly, tetramer of two alpha and two beta subunits.

Its subcellular location is the cytoplasm. The catalysed reaction is tRNA(Gly) + glycine + ATP = glycyl-tRNA(Gly) + AMP + diphosphate. This Desulfotalea psychrophila (strain LSv54 / DSM 12343) protein is Glycine--tRNA ligase alpha subunit.